We begin with the raw amino-acid sequence, 1225 residues long: MVDVNRFKSMQITLASPSKVRSWSYGEVKKPETINYRTLKPEREGLFDEVIFGPTKDWECACGKYKRIRYRGIVCDRCGVEVTRTKVRRERMGHIELKAPVSHIWYFKGIPSRMGLTLDMSPRALEEVIYFAAYVVIDPKDTPLEHKSIMTEREYRERLREYGYGSFVAKMGAEAIQDLLKQVDLEKEIAELKEELKTATGQKRVKAIRRLDVLDAFYKSGNKPEWMILNILPVIPPDLRPMLQLDGGRFASSDLNDLYRRVINRNNRLARLLELNAPGIIVQNEKRMLQEAVDALIDNGRRGRPITGPGSRPLKSLSHMLKGKQGRFRQNLLGKRVDFSGRSVIAVGPTLKMYQCGVPREMAIELFKPFVMREIVARDIVQNVKAAKRLVERGDERIWDILEEVIKEHPVLLNRAPTLHRLGIQAFEPVLIDGKALRLHPLVCEAYNADFDGDQMAIHVPLSEEAQAEARILMLAAEHILNPKDGKPVVTPSQDMVLGNYYLTMEEAGREGEGMVFKDRDEAVMAYRNGYVHLHSRVGIATDSLNKPWTEEQRHKVLLTTVGKILFNDIMPEGLPYLQEPNNANLTEGVPAKYFLPLGGDIKEAISNLELNPPFKKKNLGNIIAEIFKRFRTTETSALLDRMKNLGYHHSTLAGLTVGIADIPVVDDKTEIIEESHKRVEQITKQFRRGMITDDERYNAVTAEWRAAREKLEKRLIANQDPKNPIVMMMDSGARGNISNFSQLAGMRGLMAAPNGRIMELPILSNFREGLSVLEMFFSTHGARKGMTDTALKTADSGYLTRRLVDVAQDVIIREDDCGTDRGLLIRSIAEGKEMIESLEERLNGRYTKKTVKHPETGAVIIGPNELITEDKAREIVNAGVEEVTIRSVFTCNTRHGVCRHCYGINLATGDAVEVGEAVGTIAAQSIGEPGTQLTMRTFHTGGVASNTDITQGLPRVQEIFEARNPKGEAVITEVKGQVTAIEEDASTRTKKVFVKGETGEGEYVVPFTARMRVEVGGQVARGAALTEGSIQPKRLLAVRDVLSVETYLLGEVQKVYRSQGVEIGDKHIEVMVRQMIRKVRVMDPGDTDLLMGTLMDINDFTDANKDVLIAGGVPATGRPVLMGITKASLETNSFLSAASFQETTRVLTDAAIRGKKDHLLGLKENVIIGKIIPAGTGMARYRNLEPHAVNEEEYLNPTVEEEGNEETTEVVVDTAVETVEETVE.

Positions 60, 62, 75, and 78 each coordinate Zn(2+). Mg(2+) contacts are provided by Asp450, Asp452, and Asp454. The Zn(2+) site is built by Cys818, Cys892, Cys899, and Cys902.

This sequence belongs to the RNA polymerase beta' chain family. The RNAP catalytic core consists of 2 alpha, 1 beta, 1 beta' and 1 omega subunit. When a sigma factor is associated with the core the holoenzyme is formed, which can initiate transcription. Requires Mg(2+) as cofactor. It depends on Zn(2+) as a cofactor.

It catalyses the reaction RNA(n) + a ribonucleoside 5'-triphosphate = RNA(n+1) + diphosphate. In terms of biological role, DNA-dependent RNA polymerase catalyzes the transcription of DNA into RNA using the four ribonucleoside triphosphates as substrates. This chain is DNA-directed RNA polymerase subunit beta', found in Streptococcus pneumoniae serotype 19F (strain G54).